The chain runs to 509 residues: UDP-N-acetylmuramyl-tripeptide synthetase (509 aa).

An ATP-binding site is contributed by 124–130; sequence GTNGKTS. UDP-N-acetyl-alpha-D-muramoyl-L-alanyl-D-glutamate-binding positions include 164-165, serine 191, and arginine 199; that span reads TT. Lysine 231 is subject to N6-carboxylysine.

Belongs to the MurCDEF family. MurE subfamily. In terms of processing, carboxylation is probably crucial for Mg(2+) binding and, consequently, for the gamma-phosphate positioning of ATP.

The protein resides in the cytoplasm. It functions in the pathway cell wall biogenesis; peptidoglycan biosynthesis. Its function is as follows. Catalyzes the addition of an amino acid to the nucleotide precursor UDP-N-acetylmuramoyl-L-alanyl-D-glutamate (UMAG) in the biosynthesis of bacterial cell-wall peptidoglycan. In Tropheryma whipplei (strain TW08/27) (Whipple's bacillus), this protein is UDP-N-acetylmuramyl-tripeptide synthetase.